We begin with the raw amino-acid sequence, 369 residues long: DNA replication and repair protein RecF (369 aa).

30-37 provides a ligand contact to ATP; it reads GENGQGKT.

The protein belongs to the RecF family.

The protein localises to the cytoplasm. Functionally, the RecF protein is involved in DNA metabolism; it is required for DNA replication and normal SOS inducibility. RecF binds preferentially to single-stranded, linear DNA. It also seems to bind ATP. The chain is DNA replication and repair protein RecF from Anaeromyxobacter sp. (strain Fw109-5).